The sequence spans 133 residues: Fatty acid-binding protein, heart (133 aa).

A2 bears the N-acetylalanine mark. At T8 the chain carries Phosphothreonine. Y20 is modified (phosphotyrosine; by Tyr-kinases). A Phosphoserine modification is found at S23. Position 30 is a phosphothreonine (T30). Residue S83 is modified to Phosphoserine. (9Z)-octadecenoate is bound at residue 127–129; sequence RTY. 127–129 is a binding site for hexadecanoate; it reads RTY. An octadecanoate-binding site is contributed by 127 to 129; the sequence is RTY.

As to expression, heart, but also skeletal muscle, kidney, brain and mammary gland.

Its subcellular location is the cytoplasm. Functionally, FABPs are thought to play a role in the intracellular transport of long-chain fatty acids and their acyl-CoA esters. In Rattus norvegicus (Rat), this protein is Fatty acid-binding protein, heart (Fabp3).